Consider the following 200-residue polypeptide: Glycerol-3-phosphate acyltransferase (200 aa).

The next 5 helical transmembrane spans lie at 6–26 (LTLG…AVLV), 56–76 (SAAM…YIAF), 82–102 (QVAL…PIFF), 118–138 (APIG…MVLI), and 141–161 (YSSL…WFLD).

Belongs to the PlsY family. As to quaternary structure, probably interacts with PlsX.

The protein localises to the cell inner membrane. The catalysed reaction is an acyl phosphate + sn-glycerol 3-phosphate = a 1-acyl-sn-glycero-3-phosphate + phosphate. The protein operates within lipid metabolism; phospholipid metabolism. Its function is as follows. Catalyzes the transfer of an acyl group from acyl-phosphate (acyl-PO(4)) to glycerol-3-phosphate (G3P) to form lysophosphatidic acid (LPA). This enzyme utilizes acyl-phosphate as fatty acyl donor, but not acyl-CoA or acyl-ACP. This is Glycerol-3-phosphate acyltransferase from Shewanella sediminis (strain HAW-EB3).